The chain runs to 387 residues: Anhydro-N-acetylmuramic acid kinase (387 aa).

Residue 17–24 participates in ATP binding; it reads GTSMDGVD.

Belongs to the anhydro-N-acetylmuramic acid kinase family.

The enzyme catalyses 1,6-anhydro-N-acetyl-beta-muramate + ATP + H2O = N-acetyl-D-muramate 6-phosphate + ADP + H(+). It participates in amino-sugar metabolism; 1,6-anhydro-N-acetylmuramate degradation. The protein operates within cell wall biogenesis; peptidoglycan recycling. Functionally, catalyzes the specific phosphorylation of 1,6-anhydro-N-acetylmuramic acid (anhMurNAc) with the simultaneous cleavage of the 1,6-anhydro ring, generating MurNAc-6-P. Is required for the utilization of anhMurNAc either imported from the medium or derived from its own cell wall murein, and thus plays a role in cell wall recycling. The chain is Anhydro-N-acetylmuramic acid kinase from Burkholderia pseudomallei (strain K96243).